A 310-amino-acid chain; its full sequence is Proline dehydrogenase (310 aa).

A substrate-binding site is contributed by K98. Residue D135 is part of the active site. Residues M136, Q166, 187 to 192, 229 to 230, and 292 to 295 each bind FAD; these read RMVKGA, TH, and RIAE. R187 is a catalytic residue. 291-292 contributes to the substrate binding site; the sequence is RR.

The protein belongs to the proline dehydrogenase family. FAD serves as cofactor.

It carries out the reaction L-proline + a quinone = (S)-1-pyrroline-5-carboxylate + a quinol + H(+). It participates in amino-acid degradation; L-proline degradation into L-glutamate; L-glutamate from L-proline: step 1/2. In terms of biological role, converts proline to delta-1-pyrroline-5-carboxylate. The sequence is that of Proline dehydrogenase from Deinococcus radiodurans (strain ATCC 13939 / DSM 20539 / JCM 16871 / CCUG 27074 / LMG 4051 / NBRC 15346 / NCIMB 9279 / VKM B-1422 / R1).